The chain runs to 193 residues: Bcl-2-like protein 2 (193 aa).

The residue at position 2 (Ala2) is an N-acetylalanine. The BH4 motif lies at 9–29 (DTRALVADFVGYKLRQKGYVC). The short motif at 85–104 (ELFQGGPNWGRLVAFFVFGA) is the BH1 element. Residues 136 to 151 (DWIHSSGGWAEFTALY) carry the BH2 motif. Ala177 carries the phosphoserine modification.

The protein belongs to the Bcl-2 family. As to quaternary structure, interacts with HIF3A (via C-terminus domain). Interacts with BOP. In terms of tissue distribution, expressed (at protein level) in a wide range of tissues with highest levels in brain, spinal cord, testis, pancreas, heart, spleen and mammary glands. Moderate levels found in thymus, ovary and small intestine. Not detected in salivary gland, muscle or liver. Also expressed in cell lines of myeloid, fibroblast and epithelial origin. Not detected in most lymphoid cell lines.

It localises to the mitochondrion membrane. Functionally, promotes cell survival. Blocks dexamethasone-induced apoptosis. Mediates survival of postmitotic Sertoli cells by suppressing death-promoting activity of BAX. In Homo sapiens (Human), this protein is Bcl-2-like protein 2 (BCL2L2).